The sequence spans 542 residues: Cytochrome P450 79B1 (542 aa).

A helical transmembrane segment spans residues 21–41; that stretch reads FSNMYLLTTLQAFVAITLVML. Residue Cys478 participates in heme binding.

It belongs to the cytochrome P450 family. It depends on heme as a cofactor.

The protein localises to the membrane. In terms of biological role, converts tyrosine to para-hydrophenylacetaldoxime in para-hydroxybenzylglucosinolate biosynthesis. This Sinapis alba (White mustard) protein is Cytochrome P450 79B1 (CYP79B1).